A 444-amino-acid chain; its full sequence is Protein kinase C and casein kinase substrate in neurons protein 1 (444 aa).

2 positions are modified to phosphoserine: Ser2 and Ser79. The F-BAR domain occupies 13–283 (EETTDSFWEV…AIRGADAQED (271 aa)). Residues 26-275 (KRTVKRIDDG…HVYRELEQAI (250 aa)) adopt a coiled-coil conformation. 2 disordered regions span residues 175–194 (MNSK…LQDK) and 309–386 (LPHT…DDSK). Thr184 is modified (phosphothreonine). Over residues 314-324 (TKKEKQPKKAE) the composition is skewed to basic and acidic residues. Residues 329–351 (TNATGAVESTSQAGDRGSVSSYD) show a composition bias toward polar residues. Phosphoserine occurs at positions 346, 348, 349, 361, and 365. The SH3 domain occupies 385 to 444 (SKGVRVRALYDYDGQEQDELSFKAGDELTKLGEEDEQGWCRGRLDSGQLGLYPANYVEAI). Residue Tyr394 is modified to Phosphotyrosine. Phosphoserine occurs at positions 405 and 430.

It belongs to the PACSIN family. May form heterooligomers with other PACSINs. Interacts with MAPT. Interacts with TRPV4. Interacts (via SH3 domain) with SYNJ1 and WASL. Interacts with DNM2 and DNM3. Interacts with both COBL and DBNL. Identified in a complex composed of COBL, PACSIN1 and WASL. Interacts with EHD1 and EHD3. Homodimer. Interacts (via SH3 domain) with DNM1; the interaction is reduced by DNM1 phosphorylation. In terms of processing, phosphorylated by casein kinase 2 (CK2) and protein kinase C (PKC). In terms of tissue distribution, highly expressed in brain and, at much lower levels, in heart and pancreas.

The protein localises to the cytoplasm. It is found in the cell projection. Its subcellular location is the synapse. It localises to the synaptosome. The protein resides in the ruffle membrane. The protein localises to the membrane. It is found in the cytoplasmic vesicle membrane. Its subcellular location is the cytosol. It localises to the cell membrane. Functionally, plays a role in the reorganization of the microtubule cytoskeleton via its interaction with MAPT; this decreases microtubule stability and inhibits MAPT-induced microtubule polymerization. Plays a role in cellular transport processes by recruiting DNM1, DNM2 and DNM3 to membranes. Plays a role in the reorganization of the actin cytoskeleton and in neuron morphogenesis via its interaction with COBL and WASL, and by recruiting COBL to the cell cortex. Plays a role in the regulation of neurite formation, neurite branching and the regulation of neurite length. Required for normal synaptic vesicle endocytosis; this process retrieves previously released neurotransmitters to accommodate multiple cycles of neurotransmission. Required for normal excitatory and inhibitory synaptic transmission. Binds to membranes via its F-BAR domain and mediates membrane tubulation. The chain is Protein kinase C and casein kinase substrate in neurons protein 1 (PACSIN1) from Homo sapiens (Human).